The following is a 368-amino-acid chain: Transcription factor TGA7 (368 aa).

Positions 70–82 are enriched in polar residues; that stretch reads HNQIEAEQPSSND. Residues 70-89 are disordered; that stretch reads HNQIEAEQPSSNDNQDDDGR. One can recognise a bZIP domain in the interval 91–151; the sequence is HDKMKRRLAQ…LGPSGSINTG (61 aa). Coiled-coil stretches lie at residues 92-142 and 252-285; these read DKMK…QGHL and DQQI…SLAE. Residues 93–113 form a basic motif region; sequence KMKRRLAQNREAARKSRLRKK. The interval 119 to 133 is leucine-zipper; the sequence is LEESRLKLSQLEQEL. Residues 152–363 form the DOG1 domain; the sequence is IASFEMEYSH…RALSSLWAAR (212 aa).

This sequence belongs to the bZIP family. Binds DNA as a dimer. Interacts with NPR1 and NPR4. Interacts with GRXC7/ROXY1.

The protein resides in the nucleus. Transcriptional activator that binds specifically to the DNA sequence 5'-TGACG-3'. Recognizes ocs elements like the as-1 motif of the cauliflower mosaic virus 35S promoter. Binding to the as-1-like cis elements mediate auxin- and salicylic acid-inducible transcription. May be involved in the induction of the systemic acquired resistance (SAR) via its interaction with NPR1. The sequence is that of Transcription factor TGA7 (TGA7) from Arabidopsis thaliana (Mouse-ear cress).